We begin with the raw amino-acid sequence, 245 residues long: Small ribosomal subunit protein uS3 (245 aa).

Residues 39–111 enclose the KH type-2 domain; it reads IRNFINKNYS…EVFFNVIEIK (73 aa).

It belongs to the universal ribosomal protein uS3 family. In terms of assembly, part of the 30S ribosomal subunit. Forms a tight complex with proteins S10 and S14.

Binds the lower part of the 30S subunit head. Binds mRNA in the 70S ribosome, positioning it for translation. The protein is Small ribosomal subunit protein uS3 of Phytoplasma mali (strain AT).